The primary structure comprises 269 residues: Tryptophan synthase alpha chain (269 aa).

Catalysis depends on proton acceptor residues glutamate 49 and aspartate 60.

Belongs to the TrpA family. Tetramer of two alpha and two beta chains.

The enzyme catalyses (1S,2R)-1-C-(indol-3-yl)glycerol 3-phosphate + L-serine = D-glyceraldehyde 3-phosphate + L-tryptophan + H2O. It participates in amino-acid biosynthesis; L-tryptophan biosynthesis; L-tryptophan from chorismate: step 5/5. Functionally, the alpha subunit is responsible for the aldol cleavage of indoleglycerol phosphate to indole and glyceraldehyde 3-phosphate. The polypeptide is Tryptophan synthase alpha chain (Actinobacillus pleuropneumoniae serotype 3 (strain JL03)).